A 232-amino-acid chain; its full sequence is Large ribosomal subunit protein uL1 (232 aa).

The protein belongs to the universal ribosomal protein uL1 family. In terms of assembly, part of the 50S ribosomal subunit.

Binds directly to 23S rRNA. The L1 stalk is quite mobile in the ribosome, and is involved in E site tRNA release. In terms of biological role, protein L1 is also a translational repressor protein, it controls the translation of the L11 operon by binding to its mRNA. This is Large ribosomal subunit protein uL1 from Marinobacter nauticus (strain ATCC 700491 / DSM 11845 / VT8) (Marinobacter aquaeolei).